A 1093-amino-acid chain; its full sequence is Phosphorylase b kinase regulatory subunit beta (1093 aa).

Ala2 is subject to N-acetylalanine. Ala4 carries the post-translational modification Phosphoserine. The interval 7–29 (LTAEVSWKVLERRARTKRSGSVY) is calmodulin-binding. Ser12 bears the Phosphoserine; by autocatalysis mark. Residues Ser27 and Ser701 each carry the phosphoserine modification. The segment at 689-716 (EPPKHSKVKRQSSTPSAPELGQQPDVNI) is disordered. Calmodulin-binding stretches follow at residues 768–795 (RVYR…FSSS) and 920–951 (NGRC…ILER). The S-farnesyl cysteine moiety is linked to residue Cys1090.

It belongs to the phosphorylase b kinase regulatory chain family. As to quaternary structure, hexadecamer of 4 heterotetramers, each composed of alpha, beta, gamma, and delta subunits. Alpha (PHKA1 or PHKA2) and beta (PHKB) are regulatory subunits, gamma (PHKG1 or PHKG2) is the catalytic subunit, and delta is calmodulin. Post-translationally, ser-701 is probably phosphorylated by PKA. In terms of processing, although the final Cys may be farnesylated, the terminal tripeptide is probably not removed, and the C-terminus is not methylated.

It is found in the cell membrane. The protein operates within glycan biosynthesis; glycogen metabolism. With respect to regulation, by phosphorylation of various serine residues. Its function is as follows. Phosphorylase b kinase catalyzes the phosphorylation of serine in certain substrates, including troponin I. The beta chain acts as a regulatory unit and modulates the activity of the holoenzyme in response to phosphorylation. The polypeptide is Phosphorylase b kinase regulatory subunit beta (PHKB) (Homo sapiens (Human)).